The following is a 126-amino-acid chain: Small ribosomal subunit protein uS13 (126 aa).

The interval 101 to 126 (QKTKNNCRTRKGKKKTVANKKKKINK) is disordered.

The protein belongs to the universal ribosomal protein uS13 family. As to quaternary structure, part of the 30S ribosomal subunit. Forms a loose heterodimer with protein S19. Forms two bridges to the 50S subunit in the 70S ribosome.

Located at the top of the head of the 30S subunit, it contacts several helices of the 16S rRNA. In the 70S ribosome it contacts the 23S rRNA (bridge B1a) and protein L5 of the 50S subunit (bridge B1b), connecting the 2 subunits; these bridges are implicated in subunit movement. Contacts the tRNAs in the A and P-sites. This Karelsulcia muelleri (strain GWSS) (Sulcia muelleri) protein is Small ribosomal subunit protein uS13.